The chain runs to 466 residues: 20-hydroxyecdysone protein (466 aa).

A signal peptide spans 1 to 16; the sequence is MKPVALILVFLAISQA. The 1; approximate repeat unit spans residues 48-50; the sequence is EVK. The interval 48–157 is 16 X repeats; sequence EVKAEEVKPE…EIKKEATEIK (110 aa). The 2; approximate repeat unit spans residues 53 to 55; it reads EVK. A disordered region spans residues 55 to 94; sequence KPEEVKPIAQEEKAKDLKEEVKPEIKPEIKEQPKPDIKDE. The stretch at 58 to 60 is one 3; approximate repeat; sequence EVK. Residues 70-72 form a 4; approximate repeat; it reads DLK. The 5; approximate repeat unit spans residues 74–76; it reads EVK. Residues 78 to 80 form a 6; approximate repeat; sequence EIK. The stretch at 82–84 is one 7; approximate repeat; sequence EIK. The 8; approximate repeat unit spans residues 90–92; sequence DIK. The stretch at 94 to 96 is one 9; approximate repeat; sequence EIK. One copy of the 10; approximate repeat lies at 98–100; it reads DLK. An 11; approximate repeat occupies 102–104; sequence DIK. The 12; approximate repeat unit spans residues 106–108; it reads ELK. The interval 119–220 is disordered; it reads PNAKPLELKE…QQSTTQGNFV (102 aa). Residues 124-160 are compositionally biased toward basic and acidic residues; the sequence is LELKEKSLEAEEKPQEIKEEVQQPEIKKEATEIKEEP. The 13; approximate repeat unit spans residues 125–127; sequence ELK. The stretch at 139 to 141 is one 14; approximate repeat; the sequence is EIK. Residues 148–150 form a 15; approximate repeat; it reads EIK. The 16; approximate repeat unit spans residues 155–157; it reads EIK. The span at 170 to 180 shows a compositional bias: low complexity; the sequence is AEETVVVPAEE. Residues 185–194 show a composition bias toward polar residues; that stretch reads PVEQEQSENQ. A compositionally biased stretch (low complexity) spans 203 to 216; it reads QATQATPTQQSTTQ. N-linked (GlcNAc...) asparagine glycosylation is found at asparagine 294 and asparagine 352. Residues 378 to 435 form a disordered region; it reads RPQNAPAAAPATQATEKPAVDDKIDPANDEVGEFVPESDNELRASGENIDDSFEDAGV. A compositionally biased stretch (low complexity) spans 379–394; that stretch reads PQNAPAAAPATQATEK. The span at 404–416 shows a compositional bias: acidic residues; it reads ANDEVGEFVPESD.

The protein resides in the secreted. Probably has an essential role in embryogenesis, induces morphogenesis of imaginal disks, and may participate in multimolecular aggregates. The protein is 20-hydroxyecdysone protein (ImpE2) of Drosophila melanogaster (Fruit fly).